The sequence spans 365 residues: Probable dual-specificity RNA methyltransferase RlmN (365 aa).

Catalysis depends on Glu108, which acts as the Proton acceptor. The Radical SAM core domain maps to 114–352 (YPDRNTVCIS…SCTVRDTRGR (239 aa)). Cys121 and Cys358 are joined by a disulfide. Cys128, Cys132, and Cys135 together coordinate [4Fe-4S] cluster. Residues 179–180 (GE), Ser213, 236–238 (SLH), and Asn315 each bind S-adenosyl-L-methionine. Cys358 acts as the S-methylcysteine intermediate in catalysis.

It belongs to the radical SAM superfamily. RlmN family. It depends on [4Fe-4S] cluster as a cofactor.

Its subcellular location is the cytoplasm. The enzyme catalyses adenosine(2503) in 23S rRNA + 2 reduced [2Fe-2S]-[ferredoxin] + 2 S-adenosyl-L-methionine = 2-methyladenosine(2503) in 23S rRNA + 5'-deoxyadenosine + L-methionine + 2 oxidized [2Fe-2S]-[ferredoxin] + S-adenosyl-L-homocysteine. The catalysed reaction is adenosine(37) in tRNA + 2 reduced [2Fe-2S]-[ferredoxin] + 2 S-adenosyl-L-methionine = 2-methyladenosine(37) in tRNA + 5'-deoxyadenosine + L-methionine + 2 oxidized [2Fe-2S]-[ferredoxin] + S-adenosyl-L-homocysteine. Its function is as follows. Specifically methylates position 2 of adenine 2503 in 23S rRNA and position 2 of adenine 37 in tRNAs. This is Probable dual-specificity RNA methyltransferase RlmN from Mycolicibacterium vanbaalenii (strain DSM 7251 / JCM 13017 / BCRC 16820 / KCTC 9966 / NRRL B-24157 / PYR-1) (Mycobacterium vanbaalenii).